A 223-amino-acid polypeptide reads, in one-letter code: Voltage-dependent calcium channel gamma-1 subunit (223 aa).

The Cytoplasmic portion of the chain corresponds to 1–10; the sequence is MSQTKTAKVR. Residues 11–29 form a helical membrane-spanning segment; the sequence is VTLFFILVGGVLAMVAVVT. At 30–109 the chain is on the extracellular side; that stretch reads DHWAVLSPHL…TQKEYSISAA (80 aa). 2 N-linked (GlcNAc...) asparagine glycosylation sites follow: Asn-43 and Asn-80. Cys-57 and Cys-81 are joined by a disulfide. Residues 110–130 traverse the membrane as a helical segment; it reads AIAIFSLGFIIVGSICAFLSF. The Cytoplasmic segment spans residues 131–135; it reads GNKRD. Residues 136–156 traverse the membrane as a helical segment; that stretch reads YLLRPASMFYAFAGLCLIVSV. The Extracellular portion of the chain corresponds to 157–180; it reads EVMRQSVKRMIDSEDTVWIEHYYS. Residues 181–205 form a helical membrane-spanning segment; that stretch reads WSFACACAAFILLFLGGLFLLLFSL. Residues 206-223 lie on the Cytoplasmic side of the membrane; sequence PRMPQNPWESCMDAEPEH.

It belongs to the PMP-22/EMP/MP20 family. CACNG subfamily. Component of a calcium channel complex consisting of a pore-forming alpha subunit (CACNA1S) and the ancillary subunits CACNB1 or CACNB2, CACNG1 and CACNA2D1. The channel complex contains alpha, beta, gamma and delta subunits in a 1:1:1:1 ratio, i.e. it contains either CACNB1 or CACNB2. Post-translationally, N-glycosylated. As to expression, detected in skeletal muscle (at protein level).

Its subcellular location is the cell membrane. The protein resides in the sarcolemma. Its function is as follows. Regulatory subunit of the voltage-gated calcium channel that gives rise to L-type calcium currents in skeletal muscle. Regulates channel inactivation kinetics. The polypeptide is Voltage-dependent calcium channel gamma-1 subunit (Cacng1) (Mus musculus (Mouse)).